We begin with the raw amino-acid sequence, 192 residues long: Ion-translocating oxidoreductase complex subunit B (192 aa).

The segment at 1–26 (MNAIWIAVAAVSLLGLAFGAILGYAS) is hydrophobic. One can recognise a 4Fe-4S domain in the interval 32-91 (EDDPVVEKIDEILPQSQCGQCGYPGCRPYAEAISCNGEKINRCAPGGEAVMLKIAELLNV). [4Fe-4S] cluster is bound by residues cysteine 49, cysteine 52, cysteine 57, cysteine 74, cysteine 117, cysteine 120, cysteine 123, cysteine 127, cysteine 147, cysteine 150, cysteine 153, and cysteine 157. 4Fe-4S ferredoxin-type domains lie at 108–137 (MVAVIDENNCIGCTKCIQACPVDAIVGATR) and 138–167 (AMHTVMSDLCTGCNLCVDPCPTHCISLQPV).

This sequence belongs to the 4Fe4S bacterial-type ferredoxin family. RnfB subfamily. In terms of assembly, the complex is composed of six subunits: RsxA, RsxB, RsxC, RsxD, RsxE and RsxG. Requires [4Fe-4S] cluster as cofactor.

The protein localises to the cell inner membrane. Its function is as follows. Part of a membrane-bound complex that couples electron transfer with translocation of ions across the membrane. Required to maintain the reduced state of SoxR. The chain is Ion-translocating oxidoreductase complex subunit B from Escherichia coli O8 (strain IAI1).